The following is a 152-amino-acid chain: Protein-export protein SecB (152 aa).

This sequence belongs to the SecB family. Homotetramer, a dimer of dimers. One homotetramer interacts with 1 SecA dimer.

It is found in the cytoplasm. One of the proteins required for the normal export of preproteins out of the cell cytoplasm. It is a molecular chaperone that binds to a subset of precursor proteins, maintaining them in a translocation-competent state. It also specifically binds to its receptor SecA. The protein is Protein-export protein SecB of Rickettsia africae (strain ESF-5).